The primary structure comprises 122 residues: Small ribosomal subunit protein uS13 (122 aa).

Residues 89 to 122 (GLRHRRGLPARGQRTKTNARTRKGPRRGVAGKRK) form a disordered region.

The protein belongs to the universal ribosomal protein uS13 family. Part of the 30S ribosomal subunit. Forms a loose heterodimer with protein S19. Forms two bridges to the 50S subunit in the 70S ribosome.

Its function is as follows. Located at the top of the head of the 30S subunit, it contacts several helices of the 16S rRNA. In the 70S ribosome it contacts the 23S rRNA (bridge B1a) and protein L5 of the 50S subunit (bridge B1b), connecting the 2 subunits; these bridges are implicated in subunit movement. Contacts the tRNAs in the A and P-sites. The polypeptide is Small ribosomal subunit protein uS13 (Oleidesulfovibrio alaskensis (strain ATCC BAA-1058 / DSM 17464 / G20) (Desulfovibrio alaskensis)).